A 564-amino-acid chain; its full sequence is 5-hydroxytryptamine receptor 1 (564 aa).

A disordered region spans residues 1–26 (MALSGQDWRRHQSHRQHRNHRTQGNH). The segment covering 11-23 (HQSHRQHRNHRTQ) has biased composition (basic residues). The chain crosses the membrane as a helical span at residues 29-51 (LISTATLTLFVLFLSSWIAYAAG). 9 consecutive repeat copies span residues 89-90 (GS), 91-92 (GS), 93-94 (GS), 95-96 (GS), 97-98 (GS), 99-100 (GS), 101-102 (GS), 103-104 (GS), and 105-106 (GS). The tract at residues 89 to 106 (GSGSGSGSGSGSGSGSGS) is 9 X 2 AA tandem repeats of G-S. The chain crosses the membrane as a helical span at residues 165 to 188 (VSIVLLIVILGTVVGNVLVCIAVC). Topologically, residues 189 to 198 (MVRKLRRPCN) are cytoplasmic. The chain crosses the membrane as a helical span at residues 199–222 (YLLVSLALSDLCVALLVMPMALLY). Over 223–236 (EVLEKWNFGPLLCD) the chain is Extracellular. The cysteines at positions 235 and 314 are disulfide-linked. Residues 237–258 (IWVSFDVLCCTASILNLCAISV) traverse the membrane as a helical segment. An agonist binding region spans residues 238-247 (WVSFDVLCCT). The ergotamine site is built by aspartate 242 and threonine 247. Positions 259–261 (DRY) match the DRY motif; important for ligand-induced conformation changes motif. The Cytoplasmic segment spans residues 259-278 (DRYLAITKPLEYGVKRTPRR). Residues 279-302 (MMLCVGIVWLAAACISLPPLLILG) form a helical membrane-spanning segment. The Extracellular portion of the chain corresponds to 303–330 (NEHEDEEGQPICTVCQNFAYQIYATLGS). A helical transmembrane segment spans residues 331–353 (FYIPLSVMLFVYYQIFRAARRIV). The Cytoplasmic segment spans residues 354-454 (LEEKRAQTHL…QLAKEKKAST (101 aa)). A disordered region spans residues 367 to 396 (LNGTGSPSAPQAPPLGHTELASSGNGQRHS). The segment covering 386–396 (LASSGNGQRHS) has biased composition (polar residues). Residues 455-476 (TLGIIMSAFTVCWLPFFILALI) form a helical membrane-spanning segment. The Extracellular portion of the chain corresponds to 477–487 (RPFETMHVPAS). The helical transmembrane segment at 488 to 510 (LSSLFLWLGYANSLLNPIIYATL) threads the bilayer. Positions 503–507 (NPIIY) match the NPxxY motif; important for ligand-induced conformation changes and signaling motif. Over 511 to 564 (NRDFRKPFQEILYFRCSSLNTMMRENYYQDQYGEPPSQRVMLGDERHGARESFL) the chain is Cytoplasmic.

This sequence belongs to the G-protein coupled receptor 1 family. 5-hydroxytryptamine receptor subfamily. In terms of tissue distribution, expressed predominantly in adult heads.

It is found in the cell membrane. Functionally, G-protein coupled receptor for 5-hydroxytryptamine (serotonin). Also functions as a receptor for various alkaloids. Ligand binding causes a conformation change that triggers signaling via guanine nucleotide-binding proteins (G proteins) and modulates the activity of down-stream effectors, such as adenylate cyclase. Signaling activates adenylate cyclase activity. This Drosophila melanogaster (Fruit fly) protein is 5-hydroxytryptamine receptor 1 (5-HT7).